The sequence spans 102 residues: Small ribosomal subunit protein uS10 (102 aa).

Belongs to the universal ribosomal protein uS10 family. In terms of assembly, part of the 30S ribosomal subunit.

In terms of biological role, involved in the binding of tRNA to the ribosomes. The chain is Small ribosomal subunit protein uS10 from Parvibaculum lavamentivorans (strain DS-1 / DSM 13023 / NCIMB 13966).